Here is a 292-residue protein sequence, read N- to C-terminus: MPWIQIRINATAKTADKVSNMLLGRGAQPVTFMDAQDVPVYEPLPGETPLWGETEVMGLFDAETDPAPTIAFFQQIFGEDVGYKVEQLEDKDWVREWMDHFHPMQFGERLWICPSWRDVPNPDAVNVMLDPGLAFGTGTHPTTALCLQWLDGLDLAGKTVVDFGCGSGILGIAALKLGAARVIGIDIDPQAIQASHDNAERNGVAGQIELYLPADQPQDVEADVVVANILAGPLRELAPLIAGHGKPGSLMALSGVLESQAPELETIYGQWFDMDPTAVKEEWCRLSGRKHG.

Residues Thr143, Gly164, Asp186, and Asn228 each coordinate S-adenosyl-L-methionine.

Belongs to the methyltransferase superfamily. PrmA family.

Its subcellular location is the cytoplasm. It catalyses the reaction L-lysyl-[protein] + 3 S-adenosyl-L-methionine = N(6),N(6),N(6)-trimethyl-L-lysyl-[protein] + 3 S-adenosyl-L-homocysteine + 3 H(+). Functionally, methylates ribosomal protein L11. This chain is Ribosomal protein L11 methyltransferase, found in Aeromonas salmonicida (strain A449).